The primary structure comprises 349 residues: Aquaporin-4 (349 aa).

Transmembrane regions (helical) follow at residues 92–112 (LSESLAMFFFMSLLLGCAATA) and 125–147 (AFYHGFSIIFAIYVAGGISGGLL). An NPA 1 motif is present at residues 148-150 (NPA). Residues 167-187 (LIYMSAQYFGAFIASAVVYLI) traverse the membrane as a helical segment. N-linked (GlcNAc...) asparagine glycans are attached at residues Asn194 and Asn207. The next 2 membrane-spanning stretches (helical) occupy residues 225–245 (GAIFNQIFCTMLLTIGFLSIC) and 256–276 (MFPFAVGMLIMTVFLAFSYSA). The short motif at 281–283 (NPA) is the NPA 2 element. The helical transmembrane segment at 314-334 (WLFPYVGALLGGVIYEIFIGI) threads the bilayer.

The protein belongs to the MIP/aquaporin (TC 1.A.8) family.

Its subcellular location is the cell membrane. Aquaglyceroporin that may modulate the water content and osmolytes during anhydrobiosis. This chain is Aquaporin-4, found in Milnesium tardigradum (Water bear).